A 151-amino-acid chain; its full sequence is MFGVAKRFWIPMVIVIVVAVAAVTVSRLHSVFGSHQHAPDTGNLDPIIAFYPKHVLYEVFGPPGTVASINYLDADAQPHEVVNAAVPWSFTIVTTLTAVVANVVARGDGASLGCRITVNEVNRPGMSGDSSSWKGWGHVRWFIEEVPAGAA.

2 consecutive transmembrane segments (helical) span residues 8 to 28 and 81 to 101; these read FWIPMVIVIVVAVAAVTVSRL and VVNAAVPWSFTIVTTLTAVVA.

The protein belongs to the MmpS family.

The protein localises to the cell membrane. This chain is Probable transport accessory protein MmpS1 (mmpS1), found in Mycobacterium tuberculosis (strain CDC 1551 / Oshkosh).